Reading from the N-terminus, the 652-residue chain is Cleavage and polyadenylation specificity factor subunit 6 (652 aa).

A disordered region spans residues 20–85 (QAQDEFGGDG…GVYHQSSGSL (66 aa)). Residues 93 to 173 (YQLYVGNLTW…QAPVVTYPSK (81 aa)) form the RRM domain. 2 disordered regions span residues 184–440 (KTRP…QQMG) and 518–652 (SYNR…RSRH). The segment covering 187–203 (PVPPPQQNGPPRGPAPP) has biased composition (pro residues). A compositionally biased stretch (gly residues) spans 205–223 (MGGGPMPTGHPGGPQGGGP). 3 stretches are compositionally biased toward pro residues: residues 256-266 (SGPPRMQPPMH), 295-307 (GPRP…PPQR), and 338-352 (PQGP…PGPG). Residues 391–406 (PGMNMPPQQGMNMTPQ) are compositionally biased toward low complexity. Positions 420–435 (GPWPPPQGKPPGPFPD) are enriched in pro residues. Positions 518–528 (SYNRRERSRSR) are enriched in basic and acidic residues. The segment covering 529–538 (ERSHRSRQRR) has biased composition (basic residues). A compositionally biased stretch (basic and acidic residues) spans 539-590 (ERSTSRYRERSRERERDRDRERERDGGSYRERSRSRERERQAPDHYRDDSRS). S596 bears the Phosphoserine mark. Low complexity predominate over residues 598 to 610 (EPVVAEAAEAPSS). Basic and acidic residues predominate over residues 612–652 (RYYEDRERYRSSDRERRDRDRDRDRERERDRDRREEHRSRH).

Belongs to the RRM CPSF6/7 family.

It localises to the nucleus. In terms of biological role, may play a role in pre-mRNA 3'-processing. The chain is Cleavage and polyadenylation specificity factor subunit 6 from Drosophila melanogaster (Fruit fly).